A 559-amino-acid polypeptide reads, in one-letter code: MGSSGFSWTLPDHPKLPKGKSVAVVVLDGWGEANPDQYNCIHVAQTPVMDSLKNGAPEKWRLVKAHGTAVGLPSDDDMGNSEVGHNALGAGRIFAQGAKLVDQALASGKIYDGDGFNYIKESFESGTLHLIGLLSDGGVHSRLDQLQLLLKGVSERGAKKIRVHILTDGRDVLDGSSIGFVETLENDLLELRAKGVDAQIASGGGRMYVTMDRYENDWDVVKRGWDAQVLGEAPYKFKSALEAVKTLRAQPKANDQYLPPFVIVDDSGNAVGPVLDGDAVVTINFRADRMVMLAKALEYADFDNFDRVRVPKIRYAGMLQYDGELKLPSRYLVSPPEIDRTSGEYLVKNGIRTFACSETVKFGHVTFFWNGNRSGYFDATKEEYVEVPSDSGITFNVAPNMKALEIAEKARDALLSGKFDQVRVNLPNGDMVGHTGDIEATVVACKAADEAVKIILDAVEQVGGIYLVTADHGNAEDMVKRNKSGKPLLDKNDRIQILTSHTLQPVPVAIGGPGLHPGVKFRNDIQTPGLANVAATVMNLHGFEAPADYEQTLIEVADN.

Aspartate 28 and serine 81 together coordinate Mn(2+). Serine 81 functions as the Phosphoserine intermediate in the catalytic mechanism. Substrate contacts are provided by residues histidine 140, 170 to 171 (RD), arginine 206, arginine 213, 286 to 289 (RADR), and lysine 361. Residues aspartate 430, histidine 434, aspartate 471, histidine 472, and histidine 501 each contribute to the Mn(2+) site.

It belongs to the BPG-independent phosphoglycerate mutase family. As to quaternary structure, monomer. The cofactor is Mn(2+). The N-terminus is blocked. In terms of tissue distribution, found ubiquitously in germinating seed.

Its subcellular location is the cytoplasm. It carries out the reaction (2R)-2-phosphoglycerate = (2R)-3-phosphoglycerate. The protein operates within carbohydrate degradation; glycolysis; pyruvate from D-glyceraldehyde 3-phosphate: step 3/5. Its function is as follows. Catalyzes the interconversion of 2-phosphoglycerate and 3-phosphoglycerate. The chain is 2,3-bisphosphoglycerate-independent phosphoglycerate mutase from Zea mays (Maize).